Consider the following 229-residue polypeptide: MSSLREIILDTETTGLDPRQGHRIVEIGAIEMVNKVLTGRNFHFYINPERDMPFDAYRIHGISGEFLKDKPLFHTIADDFLEFISDSKLIIHNAPFDIKFLNHELSLLKRAEIKLLELSNAIDTLVMARSMFPGSKYNLDALCKRFKVDNSGRQLHGALKDAALLAEVYVELTGGRQSAFKMVDKSVETNNLATNQVNNKTEQATIVIKPTKEELQKHKEFLSSILKTA.

Aspartate 10 and glutamate 12 together coordinate a divalent metal cation. Residues aspartate 10, glutamate 12, aspartate 55, and histidine 60 each contribute to the substrate site. The Proton acceptor role is filled by histidine 156. Aspartate 161 provides a ligand contact to a divalent metal cation. Aspartate 161 lines the substrate pocket.

In terms of assembly, DNA polymerase III contains a core (composed of alpha, epsilon and theta chains) that associates with a tau subunit. This core dimerizes to form the POLIII' complex. PolIII' associates with the gamma complex (composed of gamma, delta, delta', psi and chi chains) and with the beta chain to form the complete DNA polymerase III complex. Mg(2+) is required as a cofactor. Requires Mn(2+) as cofactor.

It catalyses the reaction DNA(n) + a 2'-deoxyribonucleoside 5'-triphosphate = DNA(n+1) + diphosphate. Functionally, DNA polymerase III is a complex, multichain enzyme responsible for most of the replicative synthesis in bacteria. The epsilon subunit contain the editing function and is a proofreading 3'-5' exonuclease. This Rickettsia felis (strain ATCC VR-1525 / URRWXCal2) (Rickettsia azadi) protein is DNA polymerase III subunit epsilon (dnaQ).